The following is a 625-amino-acid chain: Protein arginine N-methyltransferase skb1 (625 aa).

The 309-residue stretch at 280–588 folds into the SAM-dependent MTase PRMT-type domain; that stretch reads LQVPLQPLSY…WRLTDGMRVW (309 aa). S-adenosyl-L-methionine is bound by residues Tyr-296, 305-306, Glu-359, and 386-387; these read KY and DM. Residues Glu-402 and Glu-411 each act as proton donor/acceptor in the active site.

The protein belongs to the class I-like SAM-binding methyltransferase superfamily. Protein arginine N-methyltransferase family. In terms of assembly, interacts with the N-terminal regulatory domain of shk1. Shk1, cdc42 and skb1 are able to form a ternary complex in vivo. Interacts with orb6. Interacts with Cdr1 and the Cdr1 inhibitory target Wee1.

It is found in the nucleus. Its subcellular location is the cell tip. It localises to the cell septum. The protein resides in the cytoplasm. The protein localises to the cell cortex. Its function is as follows. S-adenosyl-L-methionine-dependent protein-arginine N-methyltransferase that can catalyze both the mono- and symmetric (type II) dimethylation of the guanidino nitrogens of arginine residues in target proteins. Delays mitotic entry by inhibiting the Cdr1-Wee1 signaling pathway. Cortical nodes sequester Skb1 from its regulatory targets Cdr1 and Wee1. Positively modulates the shk1 kinase function. May be a mediator of hyperosmotic stress response. Involved in the control of cell polarity by regulating the subcellular localization of Orb6 kinase. In Schizosaccharomyces pombe (strain 972 / ATCC 24843) (Fission yeast), this protein is Protein arginine N-methyltransferase skb1.